A 236-amino-acid polypeptide reads, in one-letter code: L-aspartate dehydrogenase (236 aa).

NAD(+)-binding positions include 10 to 11 (AI), D31, 58 to 59 (AS), Y66, 80 to 81 (LS), A111, and N162. H189 is an active-site residue. 212-215 (NPKT) lines the NAD(+) pocket.

This sequence belongs to the L-aspartate dehydrogenase family. As to quaternary structure, homodimer.

It catalyses the reaction L-aspartate + NADP(+) + H2O = oxaloacetate + NH4(+) + NADPH + H(+). It carries out the reaction L-aspartate + NAD(+) + H2O = oxaloacetate + NH4(+) + NADH + H(+). It participates in cofactor biosynthesis; NAD(+) biosynthesis; iminoaspartate from L-aspartate (dehydrogenase route): step 1/1. Its function is as follows. Specifically catalyzes the NAD or NADP-dependent dehydrogenation of L-aspartate to iminoaspartate. The sequence is that of L-aspartate dehydrogenase from Archaeoglobus fulgidus (strain ATCC 49558 / DSM 4304 / JCM 9628 / NBRC 100126 / VC-16).